The primary structure comprises 464 residues: NADH-ubiquinone oxidoreductase chain 4 (464 aa).

13 helical membrane-spanning segments follow: residues 18-38 (LLPT…VLPT), 54-74 (IADI…IANW), 79-99 (SLLY…NFMC), 102-122 (MLSF…LIGL), 131-151 (AADY…LAIG), 168-188 (VVLS…GIMV), 207-227 (PLAG…YAII), 239-259 (VLYT…TSII), 266-286 (LKVI…LGIL), 297-317 (LILS…VGGI), 332-352 (GLLT…FSNI), 375-395 (TILG…MLKV), and 420-440 (LLMI…NGII).

This sequence belongs to the complex I subunit 4 family.

The protein resides in the mitochondrion membrane. The catalysed reaction is a ubiquinone + NADH + 5 H(+)(in) = a ubiquinol + NAD(+) + 4 H(+)(out). In terms of biological role, core subunit of the mitochondrial membrane respiratory chain NADH dehydrogenase (Complex I) that is believed to belong to the minimal assembly required for catalysis. Complex I functions in the transfer of electrons from NADH to the respiratory chain. The immediate electron acceptor for the enzyme is believed to be ubiquinone. This Candida albicans (strain SC5314 / ATCC MYA-2876) (Yeast) protein is NADH-ubiquinone oxidoreductase chain 4 (NAD4).